The chain runs to 405 residues: S-adenosylmethionine synthase (405 aa).

Position 139–144 (139–144 (GQGSVD)) interacts with ATP.

This sequence belongs to the AdoMet synthase 2 family. The cofactor is Mg(2+).

The enzyme catalyses L-methionine + ATP + H2O = S-adenosyl-L-methionine + phosphate + diphosphate. The protein operates within amino-acid biosynthesis; S-adenosyl-L-methionine biosynthesis; S-adenosyl-L-methionine from L-methionine: step 1/1. In terms of biological role, catalyzes the formation of S-adenosylmethionine from methionine and ATP. This chain is S-adenosylmethionine synthase, found in Thermococcus onnurineus (strain NA1).